A 384-amino-acid polypeptide reads, in one-letter code: Helix-loop-helix protein delilah (384 aa).

2 disordered regions span residues 1–101 and 187–227; these read MKSN…TANA and EEAE…KIVP. Basic residues predominate over residues 75 to 86; it reads KSRKNAPTKSKT. Residues 94 to 153 enclose the bHLH domain; it reads YRRKTANARERTRMREINTAFETLRHCVPEAIKGEDAANTNEKLTKITTLRLAMKYITML. Positions 209 to 224 are enriched in low complexity; it reads KKSSAASKRQSQKQAK.

In terms of assembly, efficient DNA binding requires dimerization with another bHLH protein, possibly with da. Expressed almost exclusively in the attachments sites of the somatic muscles to tendon cells in the epidermis.

It localises to the nucleus. Its function is as follows. Probably plays an important role in the differentiation of epidermal cells into the tendon cells that form the attachment sites for all muscles. This is Helix-loop-helix protein delilah (tx) from Drosophila melanogaster (Fruit fly).